The primary structure comprises 1132 residues: Telomerase reverse transcriptase (1132 aa).

A disordered region spans residues 1 to 66 (MSAKKPVQSK…NQNNANSGGN (66 aa)). Composition is skewed to polar residues over residues 9–26 (SKLN…NRST) and 45–55 (QSQNTTTGAFR). In terms of domain architecture, Reverse transcriptase spans 602–956 (KEMRIFCESQ…DLFHWIGISI (355 aa)). Mg(2+) is bound by residues aspartate 708, aspartate 886, and aspartate 887.

The protein belongs to the reverse transcriptase family. Telomerase subfamily.

It is found in the nucleus. The protein resides in the chromosome. The protein localises to the telomere. The enzyme catalyses DNA(n) + a 2'-deoxyribonucleoside 5'-triphosphate = DNA(n+1) + diphosphate. Its function is as follows. Telomerase is a ribonucleoprotein enzyme essential for the replication of chromosome termini in most eukaryotes. It elongates telomeres. It is a reverse transcriptase that adds simple sequence repeats to chromosome ends by copying a template sequence within the RNA component of the enzyme. The chain is Telomerase reverse transcriptase (TERT) from Oxytricha trifallax (Sterkiella histriomuscorum).